A 566-amino-acid polypeptide reads, in one-letter code: Oxygen-dependent choline dehydrogenase (566 aa).

An FAD-binding site is contributed by 7–36 (DYIICGAGSAGNVLATRLTEDPDVTVLLLE). The tract at residues 180–202 (NGYQQEGFGPMDRTVTPKGRRAS) is disordered. His-474 serves as the catalytic Proton acceptor.

This sequence belongs to the GMC oxidoreductase family. Requires FAD as cofactor.

It catalyses the reaction choline + A = betaine aldehyde + AH2. It carries out the reaction betaine aldehyde + NAD(+) + H2O = glycine betaine + NADH + 2 H(+). It participates in amine and polyamine biosynthesis; betaine biosynthesis via choline pathway; betaine aldehyde from choline (cytochrome c reductase route): step 1/1. Functionally, involved in the biosynthesis of the osmoprotectant glycine betaine. Catalyzes the oxidation of choline to betaine aldehyde and betaine aldehyde to glycine betaine at the same rate. The chain is Oxygen-dependent choline dehydrogenase from Burkholderia cenocepacia (strain HI2424).